We begin with the raw amino-acid sequence, 1129 residues long: BLOC-2 complex member HPS5 (1129 aa).

The interval glutamate 483–glutamate 503 is disordered. A phosphoserine mark is found at serine 532 and serine 534. The segment at histidine 561–arginine 609 is disordered. Basic and acidic residues predominate over residues proline 564–glutamate 576. Serine 695 bears the Phosphoserine mark.

Belongs to the HPS5 family. In terms of assembly, component of the biogenesis of lysosome-related organelles complex-2 (or BLOC2) composed of HPS3, HPS5 and HPS6. Interacts with HPS6. Interacts with HPS3. May interact with all alpha-integrin chains that have an aromatic residue before the first lysine of the conserved KXGFFKR motif, including ITGA2, ITGA3, ITGA5 and ITGA6. Widely expressed. Isoform 1:Highly expressed in lungs and testis. Isoform 2:Highly expressed in placenta, kidney, testis ovary, lung and thymus.

The protein resides in the cytoplasm. It localises to the cytosol. In terms of biological role, may regulate the synthesis and function of lysosomes and of highly specialized organelles, such as melanosomes and platelet dense granules. Regulates intracellular vesicular trafficking in fibroblasts. May be involved in the regulation of general functions of integrins. This is BLOC-2 complex member HPS5 (HPS5) from Homo sapiens (Human).